Reading from the N-terminus, the 243-residue chain is NAD-dependent protein deacetylase (243 aa).

Positions methionine 1–glutamate 243 constitute a Deacetylase sirtuin-type domain. Residues alanine 24, phenylalanine 35, arginine 36, glutamine 105, isoleucine 107, aspartate 108, and histidine 123 each coordinate NAD(+). Phenylalanine 35 provides a ligand contact to nicotinamide. Nicotinamide is bound by residues isoleucine 107 and aspartate 108. Histidine 123 acts as the Proton acceptor in catalysis. Residues cysteine 131, cysteine 134, cysteine 151, and cysteine 154 each contribute to the Zn(2+) site. Residues serine 192, serine 193, asparagine 215, and aspartate 232 each coordinate NAD(+).

The protein belongs to the sirtuin family. Class U subfamily. Zn(2+) is required as a cofactor.

It is found in the cytoplasm. It carries out the reaction N(6)-acetyl-L-lysyl-[protein] + NAD(+) + H2O = 2''-O-acetyl-ADP-D-ribose + nicotinamide + L-lysyl-[protein]. Its function is as follows. NAD-dependent protein deacetylase which modulates the activities of several enzymes which are inactive in their acetylated form. This is NAD-dependent protein deacetylase from Staphylococcus aureus (strain COL).